A 426-amino-acid polypeptide reads, in one-letter code: Serine--tRNA ligase (426 aa).

L-serine is bound at residue 231–233 (TAE). ATP-binding positions include 262 to 264 (RRE) and Val-278. Glu-285 is an L-serine binding site. 349-352 (EVSS) is a binding site for ATP. L-serine is bound at residue Ser-384.

The protein belongs to the class-II aminoacyl-tRNA synthetase family. Type-1 seryl-tRNA synthetase subfamily. As to quaternary structure, homodimer. The tRNA molecule binds across the dimer.

It is found in the cytoplasm. It carries out the reaction tRNA(Ser) + L-serine + ATP = L-seryl-tRNA(Ser) + AMP + diphosphate + H(+). It catalyses the reaction tRNA(Sec) + L-serine + ATP = L-seryl-tRNA(Sec) + AMP + diphosphate + H(+). Its pathway is aminoacyl-tRNA biosynthesis; selenocysteinyl-tRNA(Sec) biosynthesis; L-seryl-tRNA(Sec) from L-serine and tRNA(Sec): step 1/1. In terms of biological role, catalyzes the attachment of serine to tRNA(Ser). Is also able to aminoacylate tRNA(Sec) with serine, to form the misacylated tRNA L-seryl-tRNA(Sec), which will be further converted into selenocysteinyl-tRNA(Sec). This is Serine--tRNA ligase from Chlamydia felis (strain Fe/C-56) (Chlamydophila felis).